A 419-amino-acid chain; its full sequence is Putative nickel insertion protein (419 aa).

The interval 69-90 (HDPSNHPSQNTHHHHHHHTRHL) is disordered. Residues 79 to 88 (THHHHHHHTR) are compositionally biased toward basic residues.

Belongs to the LarC family.

The protein is Putative nickel insertion protein of Rippkaea orientalis (strain PCC 8801 / RF-1) (Cyanothece sp. (strain PCC 8801)).